The primary structure comprises 122 residues: Large ribosomal subunit protein uL14 (122 aa).

The protein belongs to the universal ribosomal protein uL14 family. As to quaternary structure, part of the 50S ribosomal subunit. Forms a cluster with proteins L3 and L19. In the 70S ribosome, L14 and L19 interact and together make contacts with the 16S rRNA in bridges B5 and B8.

In terms of biological role, binds to 23S rRNA. Forms part of two intersubunit bridges in the 70S ribosome. The protein is Large ribosomal subunit protein uL14 of Mycolicibacterium vanbaalenii (strain DSM 7251 / JCM 13017 / BCRC 16820 / KCTC 9966 / NRRL B-24157 / PYR-1) (Mycobacterium vanbaalenii).